The following is a 533-amino-acid chain: Cytochrome P450 9e2 (533 aa).

Cys475 provides a ligand contact to heme.

This sequence belongs to the cytochrome P450 family. Heme serves as cofactor.

Its subcellular location is the endoplasmic reticulum membrane. It localises to the microsome membrane. The sequence is that of Cytochrome P450 9e2 (CYP9E2) from Blattella germanica (German cockroach).